The sequence spans 493 residues: Glutathione hydrolase 6 (493 aa).

Topologically, residues 1–54 are cytoplasmic; sequence MERAEEPVVYQKLLPWEPSLESEEEVEEEETSEALVLNPRRHQDSSRNKAGGLP. Positions 19 to 52 are disordered; the sequence is SLESEEEVEEEETSEALVLNPRRHQDSSRNKAGG. The segment covering 20-32 has biased composition (acidic residues); the sequence is LESEEEVEEEETS. A helical; Signal-anchor for type II membrane protein transmembrane segment spans residues 55 to 75; it reads GTWARVVAALLLLAVGCSLAV. Residues 76–493 are Extracellular-facing; sequence RQLQNQGRST…PHACCPFQGF (418 aa). The disordered stretch occupies residues 83–105; the sequence is RSTGSLGSVAPPPGGHSHGPGVY. Residues Asn-161 and Asn-370 are each glycosylated (N-linked (GlcNAc...) asparagine). Positions 442–455 are enriched in low complexity; sequence PPTQAQHQHQGQQE. The interval 442–464 is disordered; it reads PPTQAQHQHQGQQEPTEHPSTCG.

It belongs to the gamma-glutamyltransferase family. Heterodimer composed of the light and heavy chains. The active site is located in the light chain. Post-translationally, cleaved by autocatalysis into a large and a small subunit and the autocatalytic cleavage is essential to the functional activation of the enzyme.

It localises to the membrane. It carries out the reaction an N-terminal (5-L-glutamyl)-[peptide] + an alpha-amino acid = 5-L-glutamyl amino acid + an N-terminal L-alpha-aminoacyl-[peptide]. It catalyses the reaction glutathione + H2O = L-cysteinylglycine + L-glutamate. The enzyme catalyses an S-substituted glutathione + H2O = an S-substituted L-cysteinylglycine + L-glutamate. It participates in sulfur metabolism; glutathione metabolism. Its function is as follows. Hydrolyzes and transfers gamma-glutamyl moieties from glutathione and other gamma-glutamyl compounds to acceptors. The sequence is that of Glutathione hydrolase 6 from Homo sapiens (Human).